We begin with the raw amino-acid sequence, 582 residues long: Regulatory solute carrier protein family 1 member 1 (582 aa).

8 disordered regions span residues 1-32, 56-76, 143-180, 303-325, 363-384, 390-409, 426-452, and 483-529; these read MSSLPTSDGFDHPAPSGQSPEVGSPTSLARSV, KASAEFQTNSKKTDPPPLQVL, EKSWHPENQTPSPVNGLQQHRETGSVQREAGQQSVPQD, VDMSTMDNKDDNSSSLLSGHGQP, VTCQSEIGAESQPSVSDLSGRR, LTPSDQYSQGSCHQATSESG, ASTSFEGLGDGLSPDREDVRRSTESAR, and SEGA…LSTP. Positions 16–32 are enriched in polar residues; sequence SGQSPEVGSPTSLARSV. Polar residues predominate over residues 148–179; that stretch reads PENQTPSPVNGLQQHRETGSVQREAGQQSVPQ. Positions 390-408 are enriched in polar residues; it reads LTPSDQYSQGSCHQATSES. 2 stretches are compositionally biased toward basic and acidic residues: residues 438–452 and 490–503; these read SPDREDVRRSTESAR and PSEHVHNPGPDRPE. Positions 536 to 576 constitute a UBA domain; the sequence is IFPAADVDRILGAGFTLQEALGALHRVGGNADLALLVLLAK.

Interacts with YRDC. In terms of tissue distribution, expressed in epithelial and subepithelial cells of small intestine.

The protein localises to the cell membrane. It localises to the nucleus. The protein resides in the golgi apparatus. Its subcellular location is the trans-Golgi network. Mediates transcriptional and post-transcriptional regulation of SLC5A1. Inhibits a dynamin and PKC-dependent exocytotic pathway of SLC5A1. Also involved in transcriptional regulation of SLC22A2. Exhibits glucose-dependent, short-term inhibition of SLC5A1 and SLC22A2 by inhibiting the release of vesicles from the trans-Golgi network. Regulates the expression of SLC5A1 in a tissue-specific manner and is specifically involved in its regulation in the small intestine. The sequence is that of Regulatory solute carrier protein family 1 member 1 (Rsc1a1) from Mus musculus (Mouse).